The sequence spans 204 residues: Peptidyl-prolyl cis-trans isomerase CYP20-1 (204 aa).

The signal sequence occupies residues methionine 1–alanine 23. The PPIase cyclophilin-type domain occupies tyrosine 38–glutamate 201.

This sequence belongs to the cyclophilin-type PPIase family. Interacts with the PP2A A subunit PP2AA1/RCN1. Ubiquitous, mostly in aerial organs. Higher levels in leaf and buds, and lower levels in seedlings.

The protein resides in the endoplasmic reticulum. It is found in the secreted. The catalysed reaction is [protein]-peptidylproline (omega=180) = [protein]-peptidylproline (omega=0). Binds cyclosporin A (CsA). CsA mediates some of its effects via an inhibitory action on PPIase. Functionally, PPIases accelerate the folding of proteins. It catalyzes the cis-trans isomerization of proline imidic peptide bonds in oligopeptides. Seems to be involved in root development. This chain is Peptidyl-prolyl cis-trans isomerase CYP20-1 (CYP20-1), found in Arabidopsis thaliana (Mouse-ear cress).